We begin with the raw amino-acid sequence, 296 residues long: 4-hydroxy-tetrahydrodipicolinate synthase (296 aa).

Thr-47 contacts pyruvate. Tyr-136 (proton donor/acceptor) is an active-site residue. Residue Lys-164 is the Schiff-base intermediate with substrate of the active site. Position 206 (Val-206) interacts with pyruvate.

Belongs to the DapA family. As to quaternary structure, homotetramer; dimer of dimers.

The protein resides in the cytoplasm. It catalyses the reaction L-aspartate 4-semialdehyde + pyruvate = (2S,4S)-4-hydroxy-2,3,4,5-tetrahydrodipicolinate + H2O + H(+). The protein operates within amino-acid biosynthesis; L-lysine biosynthesis via DAP pathway; (S)-tetrahydrodipicolinate from L-aspartate: step 3/4. In terms of biological role, catalyzes the condensation of (S)-aspartate-beta-semialdehyde [(S)-ASA] and pyruvate to 4-hydroxy-tetrahydrodipicolinate (HTPA). The sequence is that of 4-hydroxy-tetrahydrodipicolinate synthase from Thermosynechococcus vestitus (strain NIES-2133 / IAM M-273 / BP-1).